We begin with the raw amino-acid sequence, 244 residues long: Ribosomal RNA small subunit methyltransferase NEP1 (244 aa).

Residues 1-34 (MAAPSDGFKPRERSGGEQAQDWDALPPKRPRLGA) are disordered. A2 is subject to N-acetylalanine. A phosphoserine mark is found at S5 and S14. S-adenosyl-L-methionine-binding positions include T176, G201, G206, and 219–224 (ISNYPL).

The protein belongs to the class IV-like SAM-binding methyltransferase superfamily. RNA methyltransferase NEP1 family. In terms of assembly, homodimer. Part of the small subunit (SSU) processome, composed of more than 70 proteins and the RNA chaperone small nucleolar RNA (snoRNA) U3.

Its subcellular location is the nucleus. It localises to the nucleolus. It carries out the reaction pseudouridine(1248) in human 18S rRNA + S-adenosyl-L-methionine = N(1)-methylpseudouridine(1248) in human 18S rRNA + S-adenosyl-L-homocysteine + H(+). S-adenosyl-L-methionine-dependent pseudouridine N(1)-methyltransferase that methylates pseudouridine at position 1248 (Psi1248) in 18S rRNA. Involved the biosynthesis of the hypermodified N1-methyl-N3-(3-amino-3-carboxypropyl) pseudouridine (m1acp3-Psi) conserved in eukaryotic 18S rRNA. Is not able to methylate uridine at this position. Also has an essential role in 40S ribosomal subunit biogenesis independent on its methyltransferase activity, facilitating the incorporation of ribosomal protein S19 during the formation of pre-ribosomes. Part of the small subunit (SSU) processome, first precursor of the small eukaryotic ribosomal subunit. During the assembly of the SSU processome in the nucleolus, many ribosome biogenesis factors, an RNA chaperone and ribosomal proteins associate with the nascent pre-rRNA and work in concert to generate RNA folding, modifications, rearrangements and cleavage as well as targeted degradation of pre-ribosomal RNA by the RNA exosome. The polypeptide is Ribosomal RNA small subunit methyltransferase NEP1 (Homo sapiens (Human)).